A 385-amino-acid polypeptide reads, in one-letter code: Meiosis-specific protein MEI4 (385 aa).

An interaction with REC114 region spans residues 1-126; the sequence is MDVQKWYLRT…LSQHFVESCT (126 aa). The disordered stretch occupies residues 86–110; sequence AQEPKSSESTLTSMEDSGCDLSNEQ. Residues 92-107 are compositionally biased toward polar residues; that stretch reads SESTLTSMEDSGCDLS.

This sequence belongs to the MEI4L family. As to quaternary structure, part of the MCD recombinosome complex, at least composed of IHO1, REC114 and MEI4. Forms a complex with REC114; the interaction is required for MEI4 stability. Interacts (via N-terminal domain) with REC114 (via C-terminal domain). Interacts with IHO1.

The protein resides in the chromosome. Required for DNA double-strand breaks (DSBs) formation in unsynapsed regions during meiotic recombination. Probably acts by forming a complex with IHO1 and REC114, which activates DSBs formation in unsynapsed regions, an essential step to ensure completion of synapsis. This chain is Meiosis-specific protein MEI4, found in Homo sapiens (Human).